We begin with the raw amino-acid sequence, 417 residues long: Imidazolonepropionase (417 aa).

Residues histidine 80 and histidine 82 each contribute to the Fe(3+) site. Residues histidine 80 and histidine 82 each coordinate Zn(2+). 4-imidazolone-5-propanoate contacts are provided by arginine 89, tyrosine 152, and histidine 187. N-formimidoyl-L-glutamate is bound at residue tyrosine 152. Residue histidine 252 participates in Fe(3+) binding. Histidine 252 is a Zn(2+) binding site. Residue glutamate 255 coordinates 4-imidazolone-5-propanoate. A Fe(3+)-binding site is contributed by aspartate 326. Aspartate 326 is a binding site for Zn(2+). Residues asparagine 328 and glycine 330 each coordinate N-formimidoyl-L-glutamate. Position 331 (serine 331) interacts with 4-imidazolone-5-propanoate.

This sequence belongs to the metallo-dependent hydrolases superfamily. HutI family. It depends on Zn(2+) as a cofactor. Requires Fe(3+) as cofactor.

The protein localises to the cytoplasm. The enzyme catalyses 4-imidazolone-5-propanoate + H2O = N-formimidoyl-L-glutamate. It functions in the pathway amino-acid degradation; L-histidine degradation into L-glutamate; N-formimidoyl-L-glutamate from L-histidine: step 3/3. Catalyzes the hydrolytic cleavage of the carbon-nitrogen bond in imidazolone-5-propanoate to yield N-formimidoyl-L-glutamate. It is the third step in the universal histidine degradation pathway. In Bacteroides fragilis (strain ATCC 25285 / DSM 2151 / CCUG 4856 / JCM 11019 / LMG 10263 / NCTC 9343 / Onslow / VPI 2553 / EN-2), this protein is Imidazolonepropionase.